We begin with the raw amino-acid sequence, 227 residues long: 2-heptyl-1-hydroxyquinolin-4(1H)-one methyltransferase (227 aa).

This sequence belongs to the methyltransferase superfamily. Monomer.

It is found in the cytoplasm. The enzyme catalyses 2-heptyl-1-hydroxy-4(1H)-quinolinone + S-adenosyl-L-methionine = 2-heptyl-1-methoxy-4(1H)-quinolinone + S-adenosyl-L-homocysteine + H(+). It carries out the reaction 3-bromo-2-heptyl-1-hydroxy-4(1H)-quinolinone + S-adenosyl-L-methionine = 3-bromo-2-heptyl-1-methoxy-4(1H)-quinolinone + S-adenosyl-L-homocysteine + H(+). Functionally, involved in cellular response to chemical stress and may contribute to resistance toward antimicrobial natural compounds as well as drugs. Catalyzes the methylation and detoxification of the P.aeruginosa toxin 2-heptyl-1-hydroxy-4(1H)-quinolinone (HQNO) to 2-heptyl-1-methoxy-4(1H)-quinolinone (HMOQ). Can also methylate 3-bromo-2-heptyl-1-hydroxy-4(1H)-quinolinone, and shows much lower activity with 1-hydroxyquinolin-4(1H)-one, quercetin, 4-hydroxyquinolin-2(1H)-one (DHQ) and 4-hydroxyisoquinolin-1(2H)-one. The polypeptide is 2-heptyl-1-hydroxyquinolin-4(1H)-one methyltransferase (Mycobacteroides abscessus (strain ATCC 19977 / DSM 44196 / CCUG 20993 / CIP 104536 / JCM 13569 / NCTC 13031 / TMC 1543 / L948) (Mycobacterium abscessus)).